A 225-amino-acid chain; its full sequence is Futalosine hydrolase (225 aa).

The protein belongs to the PNP/UDP phosphorylase family. Futalosine hydrolase subfamily. In terms of assembly, homotetramer.

The catalysed reaction is futalosine + H2O = dehypoxanthine futalosine + hypoxanthine. It participates in quinol/quinone metabolism; menaquinone biosynthesis. With respect to regulation, no enhancing of inhibitory effects are observed with divalent metal ions. Slightly inhibited by hypoxanthine. Functionally, catalyzes the hydrolysis of futalosine (FL) to dehypoxanthine futalosine (DHFL) and hypoxanthine, a step in the biosynthesis of menaquinone (MK, vitamin K2). Is highly specific to futalosine since it does not accept aminodeoxyfutalosine (AFL), or any structurally related nucleotides and nucleosides as substrate. This chain is Futalosine hydrolase, found in Thermus thermophilus (strain ATCC 27634 / DSM 579 / HB8).